The primary structure comprises 433 residues: Histone deacetylase RPD3 (433 aa).

Positions 19 to 331 (RRVAYFYDAD…WCFETGLLNN (313 aa)) are histone deacetylase. H151 is an active-site residue. The ESA1-RPD3 motif signature appears at 320-340 (RTWCFETGLLNNVVLDKDLPY). Residues 388–433 (SVQLNHTPRDAEDLGDVEEDSAEAKDTKGGSQYARDLHVEHDNEFY) form a disordered region. Phosphothreonine is present on T394. Phosphoserine is present on S408. The segment covering 422-433 (RDLHVEHDNEFY) has biased composition (basic and acidic residues).

It belongs to the histone deacetylase family. HD type 1 subfamily. As to quaternary structure, component of the RPD3C(L) complex composed of at least ASH1, CTI6, DEP1, PHO23, RPD3, RXT2, RXT3, SAP30, SDS3, SIN3, UME1 and UME6. Component of the RPD3C(S) complex composed of at least EAF3, RCO1, RPD3, SIN3, and UME1. Interacts with cyclophilins CPR1, CPR6 and CPR7, with the kinase HOG1, and with ESS1, CYC8 and HAC1.

It is found in the cytoplasm. The protein localises to the nucleus. It carries out the reaction N(6)-acetyl-L-lysyl-[histone] + H2O = L-lysyl-[histone] + acetate. Its function is as follows. Catalytic component of the RPD3 histone deacetylase (HDAC) complexes RPD3C(L) and RPD3C(S) responsible for the deacetylation of lysine residues on the N-terminal part of the core histones (H2A, H2B, H3 and H4). Histone deacetylation plays an important role in transcriptional regulation, cell cycle progression, DNA damage response, osmotic stress response and developmental events. Is involved in rDNA and telomere silencing and in double strand breaks repair. Required for both full transcription repression and activation of many genes including cell type-specific genes (STE6, TY2 and HO), cell differentiation-specific genes (SPO13), genes that respond to external signals (PHO5) and TRK2. The RPD3 complexes regulate also chromosomal replication timing. The chain is Histone deacetylase RPD3 (RPD3) from Saccharomyces cerevisiae (strain ATCC 204508 / S288c) (Baker's yeast).